Consider the following 694-residue polypeptide: Inactive protein-arginine deiminase type-6 (694 aa).

2 positions are modified to phosphoserine: Ser10 and Ser446.

Belongs to the protein arginine deiminase family. Homodimers. Associates with alpha-tubulin. Post-translationally, phosphorylation at Ser-10, possibly by RSK-type kinases, and Ser-446 creates binding sites for 14-3-3 proteins. In terms of tissue distribution, highly expressed in oocytes and weakly expressed in other somatic tissues.

The protein localises to the cytoplasm. It is found in the cytoplasmic vesicle. It localises to the secretory vesicle. Its subcellular location is the cortical granule. The protein resides in the nucleus. Its function is as follows. Structural constituent of cytoplasmic lattices, which plays a key role in early embryonic development. Cytoplasmic lattices consist in fibrous structures found in the cytoplasm of oocytes and preimplantation embryos. They are required to store maternal proteins critical for embryonic development, such as ribosomal proteins and proteins that control epigenetic reprogramming of the preimplantation embryo, and prevent their degradation or activation. In contrast to other members of the family, does not show protein-arginine deiminase activity due to its inability to bind Ca(2+). This Homo sapiens (Human) protein is Inactive protein-arginine deiminase type-6.